The primary structure comprises 822 residues: AP-1 complex subunit gamma-1 (822 aa).

Residues E597–L628 are disordered. Positions A702 to P817 constitute a GAE domain.

It belongs to the adaptor complexes large subunit family. Adaptor protein complex 1 (AP-1) is a heterotetramer composed of two large adaptins (gamma-type subunit AP1G1 and beta-type subunit AP1B1), a medium adaptin (mu-type subunit AP1M1 or AP1M2) and a small adaptin (sigma-type subunit AP1S1 or AP1S2 or AP1S3). Interacts (via GAE domain) with RABEP1. Interacts with EPS15. Interacts with SYNRG/gamma-synergin. Interacts (via GAE domain) with AP1AR (via coiled-coil domain). Interacts with CLN3 (via dileucine motif); this interaction facilitates lysosomal targeting. Interacts (via GAE domain) with AFTPH/aftiphilin; the interaction is required to recruit AFTPH/aftiphilin to the perinuclear region of the cell.

It is found in the golgi apparatus. The protein resides in the cytoplasmic vesicle. It localises to the clathrin-coated vesicle membrane. The protein localises to the cytoplasm. Its subcellular location is the perinuclear region. It is found in the clathrin-coated vesicle. The protein resides in the membrane. It localises to the clathrin-coated pit. Functionally, subunit of clathrin-associated adaptor protein complex 1 that plays a role in protein sorting in the late-Golgi/trans-Golgi network (TGN) and/or endosomes. The AP complexes mediate both the recruitment of clathrin to membranes and the recognition of sorting signals within the cytosolic tails of transmembrane cargo molecules. In association with AFTPH/aftiphilin in the aftiphilin/p200/gamma-synergin complex, involved in the trafficking of transferrin from early to recycling endosomes, and the membrane trafficking of furin and the lysosomal enzyme cathepsin D between the trans-Golgi network (TGN) and endosomes. The protein is AP-1 complex subunit gamma-1 (AP1G1) of Pongo abelii (Sumatran orangutan).